A 437-amino-acid polypeptide reads, in one-letter code: Protein translocase subunit SecY (437 aa).

10 helical membrane passes run 23 to 43 (IVFL…PIPG), 77 to 97 (IFAL…LLTL), 125 to 145 (LILA…IAGI), 154 to 174 (FYFY…LMWL), 183 to 203 (IGNG…PSAI), 217 to 237 (ILLF…VVFM), 271 to 291 (MAGV…ATII), 315 to 335 (YLIL…GLVF), 367 to 387 (IMLR…LIPE), and 395 to 415 (VPFY…IDFI).

This sequence belongs to the SecY/SEC61-alpha family. In terms of assembly, component of the Sec protein translocase complex. Heterotrimer consisting of SecY, SecE and SecG subunits. The heterotrimers can form oligomers, although 1 heterotrimer is thought to be able to translocate proteins. Interacts with the ribosome. Interacts with SecDF, and other proteins may be involved. Interacts with SecA.

Its subcellular location is the cell membrane. Its function is as follows. The central subunit of the protein translocation channel SecYEG. Consists of two halves formed by TMs 1-5 and 6-10. These two domains form a lateral gate at the front which open onto the bilayer between TMs 2 and 7, and are clamped together by SecE at the back. The channel is closed by both a pore ring composed of hydrophobic SecY resides and a short helix (helix 2A) on the extracellular side of the membrane which forms a plug. The plug probably moves laterally to allow the channel to open. The ring and the pore may move independently. The chain is Protein translocase subunit SecY from Buchnera aphidicola subsp. Acyrthosiphon pisum (strain APS) (Acyrthosiphon pisum symbiotic bacterium).